Consider the following 314-residue polypeptide: MQKLPAGRKRSYLMYTLTGLKLKNPTILAAGVLGTTGASLCRVAREGGAGAVVTKSIGPAPKTGHPNPSMIELDCGFLNAMGLPNPSYPGFLQELEFAKENSDAPVIASIFGGTPSEFAEVAEGLLPAKPDAFELNVSCPHAEGYGAAIGSNPCLVEAVTAAVKDVVNVPVWVKLTPNVADITCIGNAAESGGADAVVAINTVKGMAIDIESGYPVLGNRSGGLSGKAVKPVAVKCVYDLFTALEIPVIGVGGVSSWEDAVEMIMAGAAAVQVGSAVYDRVGIFSEIGKGIEAFLKRKGYSDIKKITGLAHEMV.

Substrate contacts are provided by residues Lys-55, 79-83 (NAMGL), and Asn-136. Residue 55-56 (KS) coordinates FMN. Position 136 (Asn-136) interacts with FMN. The active-site Nucleophile is Cys-139. FMN is bound by residues Lys-174 and Ile-200. 201–202 (NT) is a substrate binding site. FMN is bound by residues Gly-226, 252 to 253 (GG), and 274 to 275 (GS).

This sequence belongs to the dihydroorotate dehydrogenase family. Type 1 subfamily. In terms of assembly, heterotetramer of 2 PyrK and 2 PyrD type B subunits. FMN serves as cofactor.

The protein resides in the cytoplasm. It carries out the reaction (S)-dihydroorotate + NAD(+) = orotate + NADH + H(+). Its pathway is pyrimidine metabolism; UMP biosynthesis via de novo pathway; orotate from (S)-dihydroorotate (NAD(+) route): step 1/1. In terms of biological role, catalyzes the conversion of dihydroorotate to orotate with NAD(+) as electron acceptor. This is Dihydroorotate dehydrogenase B (NAD(+)), catalytic subunit (pyrD) from Methanosarcina mazei (strain ATCC BAA-159 / DSM 3647 / Goe1 / Go1 / JCM 11833 / OCM 88) (Methanosarcina frisia).